The sequence spans 67 residues: Toxin Bl-1 (67 aa).

The 65-residue stretch at 2 to 66 folds into the LCN-type CS-alpha/beta domain; sequence RDGYISQPEN…GIIVDGIKCH (65 aa). 4 disulfide bridges follow: cysteine 12/cysteine 65, cysteine 16/cysteine 37, cysteine 23/cysteine 47, and cysteine 27/cysteine 49. Threonine 67 carries the threonine amide modification.

Belongs to the long (4 C-C) scorpion toxin superfamily. Sodium channel inhibitor family. Alpha subfamily. In terms of tissue distribution, expressed by the venom gland.

It localises to the secreted. In terms of biological role, alpha toxins bind voltage-independently at site-3 of sodium channels (Nav) and inhibit the inactivation of the activated channels, thereby blocking neuronal transmission. Is highly toxic to insects (tested on the crickets A.domesticus). This peptide may also be toxic to mammals, since it is similar to alpha-like toxins that are active on both insect and mammalian sodium channels. The sequence is that of Toxin Bl-1 from Buthacus leptochelys (Egyptian fat-tailed scorpion).